We begin with the raw amino-acid sequence, 421 residues long: Peroxisomal succinyl-coenzyme A thioesterase (421 aa).

Catalysis depends on serine 232, which acts as the Charge relay system. N6-succinyllysine is present on lysine 313. Catalysis depends on charge relay system residues aspartate 326 and histidine 360. A Microbody targeting signal motif is present at residues 419–421 (CRL).

The protein belongs to the C/M/P thioester hydrolase family. Mainly expressed in liver and kidney. Weakly expressed in other tissues including intestine, adrenal gland and adipose tissues.

It is found in the peroxisome. It catalyses the reaction succinyl-CoA + H2O = succinate + CoA + H(+). The enzyme catalyses glutaryl-CoA + H2O = glutarate + CoA + H(+). Its pathway is lipid metabolism; fatty acid metabolism. Catalyzes the hydrolysis of acyl-CoAs into free fatty acids and coenzyme A (CoASH), regulating their respective intracellular levels. In contrast to its human ortholog, functions essentially as a succinyl-CoA thioesterase with no activity with medium to long chain saturated acyl-CoAs and with a low activity toward glutaryl-CoA. The polypeptide is Peroxisomal succinyl-coenzyme A thioesterase (Acot4) (Mus musculus (Mouse)).